The following is a 235-amino-acid chain: Probable Ni/Fe-hydrogenase 1 B-type cytochrome subunit (235 aa).

The Cytoplasmic segment spans residues 1–19 (MQQKSDNVVSHYVFEAPVR). A helical transmembrane segment spans residues 20-40 (IWHWLTVLCMAVLMVTGYFIG). Residues 41–63 (KPLPSVSGEATYLFYMGYIRLIH) are Periplasmic-facing. Residues 64–84 (FSAGMVFTVVLLMRIYWAFVG) form a helical membrane-spanning segment. Residues 85–130 (NRYSRELFIVPVWRKSWWQGVWYEIRWYLFLAKRPSADIGHNPIAQ) are Cytoplasmic-facing. A helical transmembrane segment spans residues 131–151 (AAMFGYFLMSVFMIITGFALY). Topologically, residues 152–185 (SEHSQYAIFAPFRYVVEFFYWTGGNSMDIHSWHR) are periplasmic. A helical transmembrane segment spans residues 186–203 (LGMWLIGAFVIGHVYMAL). Over 204 to 235 (REDIMSDDTVISTMVNGYRSHKFGKISNKERS) the chain is Cytoplasmic.

Belongs to the HupC/HyaC/HydC family.

It is found in the cell inner membrane. Its function is as follows. Probable b-type cytochrome. The protein is Probable Ni/Fe-hydrogenase 1 B-type cytochrome subunit (hyaC) of Escherichia coli O157:H7.